The sequence spans 32 residues: Cytochrome b6-f complex subunit 8 (32 aa).

A helical transmembrane segment spans residues 6–26; it reads IVSLAWAALMVVFTFSLSLVV.

It belongs to the PetN family. As to quaternary structure, the 4 large subunits of the cytochrome b6-f complex are cytochrome b6, subunit IV (17 kDa polypeptide, PetD), cytochrome f and the Rieske protein, while the 4 small subunits are PetG, PetL, PetM and PetN. The complex functions as a dimer.

Its subcellular location is the plastid. The protein resides in the chloroplast thylakoid membrane. Its function is as follows. Component of the cytochrome b6-f complex, which mediates electron transfer between photosystem II (PSII) and photosystem I (PSI), cyclic electron flow around PSI, and state transitions. The polypeptide is Cytochrome b6-f complex subunit 8 (Illicium oligandrum (Star anise)).